A 610-amino-acid polypeptide reads, in one-letter code: Elongation factor 4 (610 aa).

In terms of domain architecture, tr-type G spans 14–198; that stretch reads ANIRNFSIVA…AIVTRLPPPQ (185 aa). Residues 26–31 and 145–148 each bind GTP; these read DHGKST and NKVD.

Belongs to the TRAFAC class translation factor GTPase superfamily. Classic translation factor GTPase family. LepA subfamily.

Its subcellular location is the cell inner membrane. The enzyme catalyses GTP + H2O = GDP + phosphate + H(+). In terms of biological role, required for accurate and efficient protein synthesis under certain stress conditions. May act as a fidelity factor of the translation reaction, by catalyzing a one-codon backward translocation of tRNAs on improperly translocated ribosomes. Back-translocation proceeds from a post-translocation (POST) complex to a pre-translocation (PRE) complex, thus giving elongation factor G a second chance to translocate the tRNAs correctly. Binds to ribosomes in a GTP-dependent manner. The protein is Elongation factor 4 of Nitrobacter hamburgensis (strain DSM 10229 / NCIMB 13809 / X14).